Reading from the N-terminus, the 337-residue chain is Pseudouridine-5'-phosphate glycosidase (337 aa).

Glu26 (proton donor) is an active-site residue. 2 residues coordinate substrate: Lys87 and Val107. A Mn(2+)-binding site is contributed by Asp139. Residue Ser141 to Asp143 participates in substrate binding. Catalysis depends on Lys160, which acts as the Nucleophile. The span at Ser306–Arg325 shows a compositional bias: low complexity. The segment at Ser306 to Trp337 is disordered.

The protein belongs to the pseudouridine-5'-phosphate glycosidase family. In terms of assembly, homotrimer. Requires Mn(2+) as cofactor.

The enzyme catalyses D-ribose 5-phosphate + uracil = psi-UMP + H2O. Catalyzes the reversible cleavage of pseudouridine 5'-phosphate (PsiMP) to ribose 5-phosphate and uracil. Functions biologically in the cleavage direction, as part of a pseudouridine degradation pathway. This Methylobacterium nodulans (strain LMG 21967 / CNCM I-2342 / ORS 2060) protein is Pseudouridine-5'-phosphate glycosidase.